Reading from the N-terminus, the 267-residue chain is MKLIIEENADKVAEFAARYVVTKINEATENGKYLVLGLPTGSTPLGMYKKLIEFYNAGVISFEKVKTFNMDEYVDLPRDHTESYHSFMFDNFFRHIDINPANIHILDGNTSDHEKECEEYERKIKESGGIDLFVGGIGPDGHIAFNEPGSSLASRTRIKTLNEDTIQANARFFGGDITKVPTQALTVGVQTVMDAREVMILITGSHKALALHQAIECGISHMCTVSAMQMHRCATFIADEDATLELKVKTVKYFKGLMNHHRSLVMF.

The active-site Proton acceptor; for enolization step is Asp-71. Asp-140 acts as the For ring-opening step in catalysis. His-142 acts as the Proton acceptor; for ring-opening step in catalysis. The active-site For ring-opening step is the Glu-147.

Belongs to the glucosamine/galactosamine-6-phosphate isomerase family. As to quaternary structure, homohexamer.

It localises to the cytoplasm. The enzyme catalyses alpha-D-glucosamine 6-phosphate + H2O = beta-D-fructose 6-phosphate + NH4(+). The protein operates within nucleotide-sugar biosynthesis; UDP-N-acetyl-alpha-D-glucosamine biosynthesis; alpha-D-glucosamine 6-phosphate from D-fructose 6-phosphate: step 1/1. Functionally, catalyzes the reversible conversion of alpha-D-glucosamine 6-phosphate (GlcN-6P) into beta-D-fructose 6-phosphate (Fru-6P) and ammonium ion, a regulatory reaction step in de novo uridine diphosphate-N-acetyl-alpha-D-glucosamine (UDP-GlcNAc) biosynthesis via hexosamine pathway. The protein is Glucosamine-6-phosphate deaminase of Caenorhabditis elegans.